Reading from the N-terminus, the 356-residue chain is 5-amino-6-(D-ribitylamino)uracil--L-tyrosine 4-hydroxyphenyl transferase (356 aa).

The 235-residue stretch at 47-281 (VTYIVNRNIN…AIARILLNTH (235 aa)) folds into the Radical SAM core domain. The [4Fe-4S] cluster site is built by Cys-61, Cys-65, and Cys-68.

This sequence belongs to the radical SAM superfamily. CofH family. Consists of two subunits, CofG and CofH. [4Fe-4S] cluster serves as cofactor.

The catalysed reaction is 5-amino-6-(D-ribitylamino)uracil + L-tyrosine + S-adenosyl-L-methionine = 5-amino-5-(4-hydroxybenzyl)-6-(D-ribitylimino)-5,6-dihydrouracil + 2-iminoacetate + 5'-deoxyadenosine + L-methionine + H(+). Its pathway is cofactor biosynthesis; coenzyme F0 biosynthesis. Catalyzes the radical-mediated synthesis of 5-amino-5-(4-hydroxybenzyl)-6-(D-ribitylimino)-5,6-dihydrouracil from 5-amino-6-(D-ribitylamino)uracil and L-tyrosine. The sequence is that of 5-amino-6-(D-ribitylamino)uracil--L-tyrosine 4-hydroxyphenyl transferase from Methanococcoides burtonii (strain DSM 6242 / NBRC 107633 / OCM 468 / ACE-M).